Reading from the N-terminus, the 142-residue chain is Transcriptional regulator MraZ (142 aa).

2 SpoVT-AbrB domains span residues 5–51 and 77–120; these read ASSL…PRNE and AMDV…DAAT.

The protein belongs to the MraZ family. Forms oligomers.

The protein resides in the cytoplasm. It localises to the nucleoid. The chain is Transcriptional regulator MraZ from Polaromonas sp. (strain JS666 / ATCC BAA-500).